A 1364-amino-acid chain; its full sequence is RecQ-like DNA helicase BLM (1364 aa).

Disordered stretches follow at residues 108–131 (VHGN…TGIN) and 147–174 (DDFD…KNTS). Residues 328–377 (DSKVPSQLLTLMLEICDLVDKIPISELHVLSCGLDLKKKRDMRKRLLSND) form a necessary for dimerization and homooligomerization region. Disordered stretches follow at residues 380 to 416 (FRSS…ESLS), 484 to 515 (RFNT…NPDL), and 535 to 580 (SPAA…SLLS). The segment covering 387-399 (SSTVSLTSCTSST) has biased composition (low complexity). Positions 484–503 (RFNTPQNEKPISSSTCTRPY) are enriched in polar residues. Positions 555 to 566 (AQLDSRNKEKNT) are enriched in basic and acidic residues. Residues 567 to 580 (RNNTGDTTNPSLLS) show a composition bias toward polar residues. Residues 620–624 (FRTNQ) and 644–648 (GGGKS) contribute to the ATP site. One can recognise a Helicase ATP-binding domain in the interval 628–803 (INACLCGEDC…LNQLKMTKPQ (176 aa)). A DEAH box motif is present at residues 747–750 (DEAH). 2 3' overhang DNA-binding regions span residues 822 to 825 (KPKR) and 849 to 851 (SRH). Residues 829–976 (DCVEWIKKHH…TKQTHFNNLY (148 aa)) enclose the Helicase C-terminal domain. Arginine 934 is a binding site for ATP. The 3' overhang DNA-binding stretch occupies residues 952–955 (RIRR). Residues cysteine 988, cysteine 1007, cysteine 1015, and cysteine 1018 each coordinate Zn(2+). The segment at 1046-1090 (LVQGRGKGRSNNTRLTLNMMVDIFLGSKSAKIQTGLFGKGAAYSR) is DNA Holliday junction binding. 3' overhang DNA-binding stretches follow at residues 1061 to 1063 (TLN), 1072 to 1076 (SKSAK), and 1111 to 1117 (YITFNDQ). An HRDC domain is found at 1164 to 1244 (EEMVKKCQAE…QKYSEWTLPV (81 aa)). Residues 1179–1196 (KRLGKIFGVHYFNIFNTA) form a necessary for ssDNA and DNA Holliday junction binding region. Position 1194 (asparagine 1194) interacts with ATP. Positions 1251-1364 (SGGPANVSAR…RFLKPSYSMF (114 aa)) are disordered. Residues 1273–1282 (KSSYFSSNNK) show a composition bias toward polar residues. Basic residues predominate over residues 1283–1300 (KGPKRKNSSYFGKSKKRK). A Nuclear localization signal motif is present at residues 1285–1301 (PKRKNSSYFGKSKKRKT). Residues 1306–1335 (QQSRSKNGNSSYARKNSTAKTSSSYISGSK) are compositionally biased toward polar residues.

Belongs to the helicase family. RecQ subfamily. As to quaternary structure, monomer. Homodimer (via N-terminus). Homotetramer (via N-terminus); dimer of dimers. Homohexamer (via N-terminus). Self-association negatively regulates DNA unwinding amplitude and rate. Oligomer complexes dissociate into monomer in presence of ATP. Zn(2+) serves as cofactor.

It localises to the nucleus. It carries out the reaction Couples ATP hydrolysis with the unwinding of duplex DNA by translocating in the 3'-5' direction.. The enzyme catalyses ATP + H2O = ADP + phosphate + H(+). In terms of biological role, ATP-dependent DNA helicase that unwinds single- and double-stranded DNA in a 3'-5' direction. Participates in DNA replication and repair. Involved in 5'-end resection of DNA during double-strand break (DSB) repair. Negatively regulates sister chromatid exchange (SCE). Stimulates DNA 4-way junction branch migration and DNA Holliday junction dissolution. Binds single-stranded DNA (ssDNA), forked duplex DNA and DNA Holliday junction. The sequence is that of RecQ-like DNA helicase BLM (blm) from Xenopus laevis (African clawed frog).